Consider the following 573-residue polypeptide: Potassium-transporting ATPase potassium-binding subunit (573 aa).

10 helical membrane-spanning segments follow: residues 6-26 (ILFA…GSYI), 66-86 (FFSL…ILLL), 135-155 (ALAV…IALI), 177-197 (VFWI…FQGV), 257-277 (IQMV…GKWV), 283-303 (GWLI…VMTI), 382-402 (IFGG…LAVF), 428-448 (MFAL…AAVI), 493-513 (ITIA…VIML), and 537-557 (FIFA…TIFP).

This sequence belongs to the KdpA family. In terms of assembly, the system is composed of three essential subunits: KdpA, KdpB and KdpC.

The protein resides in the cell inner membrane. Functionally, part of the high-affinity ATP-driven potassium transport (or Kdp) system, which catalyzes the hydrolysis of ATP coupled with the electrogenic transport of potassium into the cytoplasm. This subunit binds the periplasmic potassium ions and delivers the ions to the membrane domain of KdpB through an intramembrane tunnel. The protein is Potassium-transporting ATPase potassium-binding subunit of Francisella tularensis subsp. holarctica (strain FTNF002-00 / FTA).